The primary structure comprises 28 residues: Chassatide C11 (28 aa).

Disulfide bonds link cysteine 3-cysteine 19, cysteine 7-cysteine 21, and cysteine 12-cysteine 26. Methionine 16 bears the Methionine sulfoxide; in form chassatide chaC11A mark.

The protein belongs to the cyclotide family. Bracelet subfamily. As to expression, expressed in fruit, pedicel and stem but not in leaf and root (at protein level).

Chassatide C11: Probably participates in a plant defense mechanism. Active against E.coli ATCC 25922 (MIC=8.5 uM) but not against S.aureus ATCC 12600 or S.epidermidis ATCC 14990. Has cytotoxic and hemolytic activity. Its function is as follows. Chassatide C11A: Probably participates in a plant defense mechanism. Has no activity against bacteria up to a concentration of 80 uM. Has no cytotoxic and no hemolytic activity. The sequence is that of Chassatide C11 from Chassalia chartacea (Chassalia curviflora).